Consider the following 453-residue polypeptide: Ribulose bisphosphate carboxylase large chain (453 aa).

Positions 1 to 2 (MS) are excised as a propeptide. Proline 3 bears the N-acetylproline mark. Residue lysine 14 is modified to N6,N6,N6-trimethyllysine. Substrate-binding residues include asparagine 123 and threonine 173. Lysine 175 acts as the Proton acceptor in catalysis. Position 177 (lysine 177) interacts with substrate. Lysine 201, aspartate 203, and glutamate 204 together coordinate Mg(2+). Residue lysine 201 is modified to N6-carboxylysine. Histidine 294 (proton acceptor) is an active-site residue. 3 residues coordinate substrate: arginine 295, histidine 327, and serine 379.

Belongs to the RuBisCO large chain family. Type I subfamily. In terms of assembly, heterohexadecamer of 8 large chains and 8 small chains; disulfide-linked. The disulfide link is formed within the large subunit homodimers. It depends on Mg(2+) as a cofactor. Post-translationally, the disulfide bond which can form in the large chain dimeric partners within the hexadecamer appears to be associated with oxidative stress and protein turnover.

The protein resides in the plastid. The protein localises to the chloroplast. The enzyme catalyses 2 (2R)-3-phosphoglycerate + 2 H(+) = D-ribulose 1,5-bisphosphate + CO2 + H2O. It carries out the reaction D-ribulose 1,5-bisphosphate + O2 = 2-phosphoglycolate + (2R)-3-phosphoglycerate + 2 H(+). RuBisCO catalyzes two reactions: the carboxylation of D-ribulose 1,5-bisphosphate, the primary event in carbon dioxide fixation, as well as the oxidative fragmentation of the pentose substrate in the photorespiration process. Both reactions occur simultaneously and in competition at the same active site. The polypeptide is Ribulose bisphosphate carboxylase large chain (Hydnophytum formicarum (Ant plant)).